Reading from the N-terminus, the 313-residue chain is Ribosomal RNA small subunit methyltransferase H (313 aa).

Residues 35-37 (GGH), Asp55, Phe79, Asp101, and Gln108 each bind S-adenosyl-L-methionine.

This sequence belongs to the methyltransferase superfamily. RsmH family.

The protein localises to the cytoplasm. It carries out the reaction cytidine(1402) in 16S rRNA + S-adenosyl-L-methionine = N(4)-methylcytidine(1402) in 16S rRNA + S-adenosyl-L-homocysteine + H(+). Functionally, specifically methylates the N4 position of cytidine in position 1402 (C1402) of 16S rRNA. The protein is Ribosomal RNA small subunit methyltransferase H of Salmonella typhi.